The following is a 323-amino-acid chain: Olfactory receptor 4K5 (323 aa).

The Extracellular segment spans residues 1-25 (MDKSNSSVVSEFVLLGLCSSQKLQL). Asn-5 is a glycosylation site (N-linked (GlcNAc...) asparagine). Residues 26-49 (FYFCFFSVLYTVIVLGNLLIILTV) form a helical membrane-spanning segment. Residues 50–57 (TSDTSLHS) are Cytoplasmic-facing. A helical membrane pass occupies residues 58–79 (PMYFLLGNLSFVDICQASFATP). Topologically, residues 80 to 100 (KMIADFLSAHETISFSGCIAQ) are extracellular. A disulfide bridge connects residues Cys-97 and Cys-189. The helical transmembrane segment at 101-120 (IFFIHLFTGGEMVLLVSMAY) threads the bilayer. Residues 121-139 (DRYVAICKPLYYVVIMSRR) lie on the Cytoplasmic side of the membrane. Residues 140–158 (TCTVLVMISWAVSLVHTLS) form a helical membrane-spanning segment. Over 159–195 (QLSFTVNLPFCGPNVVDSFFCDLPRVTKLACLDSYII) the chain is Extracellular. A helical membrane pass occupies residues 196-219 (EILIVVNSGILSLSTFSLLVSSYI). Residues 220-235 (IILVTVWLKSSAAMAK) lie on the Cytoplasmic side of the membrane. The chain crosses the membrane as a helical span at residues 236–258 (AFSTLASHIAVVILFFGPCIFIY). Over 259–269 (VWPFTISPLDK) the chain is Extracellular. The chain crosses the membrane as a helical span at residues 270–289 (FLAIFYTVFTPVLNPIIYTL). Topologically, residues 290-323 (RNRDMKAAVRKIVNHYLRPRRISEMSLVVRTSFH) are cytoplasmic.

This sequence belongs to the G-protein coupled receptor 1 family.

It localises to the cell membrane. Its function is as follows. Odorant receptor. The protein is Olfactory receptor 4K5 (OR4K5) of Homo sapiens (Human).